A 467-amino-acid polypeptide reads, in one-letter code: Retinoic acid receptor RXR-alpha (467 aa).

The interval 1 to 112 is disordered; that stretch reads MDTKHFLPLD…MNPVSSTEDI (112 aa). Positions 1–139 are modulating domain; sequence MDTKHFLPLD…GNMASFTKHI (139 aa). Residue Lys4 forms a Glycyl lysine isopeptide (Lys-Gly) (interchain with G-Cter in SUMO2) linkage. The span at 11-25 shows a compositional bias: polar residues; it reads FSTQVNSSSLNSPTG. Ser22 and Ser28 each carry phosphoserine. A compositionally biased stretch (low complexity) spans 32-52; it reads PSLHPSLGPGIGSPLGSPGQL. Positions 54-63 are enriched in polar residues; it reads SPISTLSSPI. Residues Ser61 and Ser75 each carry the phosphoserine; by MAPK8 and MAPK9 modification. Polar residues predominate over residues 83 to 109; it reads SVPTTPTLGFGTGSPQLNSPMNPVSST. Thr87 carries the post-translational modification Phosphothreonine; by MAPK8 and MAPK9. Lys113 is covalently cross-linked (Glycyl lysine isopeptide (Lys-Gly) (interchain with G-Cter in SUMO)). Position 134 is a phosphoserine (Ser134). The Zn(2+) site is built by Cys140 and Cys143. The segment at 140–160 adopts an NR C4-type zinc-finger fold; the sequence is CAICGDRSSGKHYGVYSCEGC. Positions 140–205 form a DNA-binding region, nuclear receptor; the sequence is CAICGDRSSG…RYQKCLAMGM (66 aa). Lys150 is modified (N6-acetyllysine). Positions 157 and 160 each coordinate Zn(2+). The segment at 165 to 170 is nuclear localization signal; it reads KRTVRK. Residues Cys176, Cys182, Cys192, and Cys195 each coordinate Zn(2+). The NR C4-type zinc finger occupies 176–200; the sequence is CRDNKDCLIDKRQRNRCQYCRYQKC. Positions 206 to 229 are hinge; that stretch reads KREAVQEERQRGKDRNENEVESTS. Over residues 211-223 the composition is skewed to basic and acidic residues; the sequence is QEERQRGKDRNEN. The tract at residues 211–233 is disordered; it reads QEERQRGKDRNENEVESTSSANE. The region spanning 232–463 is the NR LBD domain; that stretch reads NEDMPVEKIL…TFLMEMLEAP (232 aa). A Phosphoserine modification is found at Ser264. At Ser265 the chain carries Phosphoserine; by MAPK8 and MAPK9. The 9-cis-retinoate site is built by Arg321 and Ala332. All-trans-retinoate contacts are provided by Arg321 and Ala332. The segment at 353-373 is required for nuclear export; that stretch reads RVLTELVSKMRDMQMDKTELG.

It belongs to the nuclear hormone receptor family. NR2 subfamily. As to quaternary structure, homodimer. Heterodimer with RARA; required for ligand-dependent retinoic acid receptor transcriptional activity. Heterodimer with PPARA (via the leucine-like zipper in the LBD); the interaction is required for PPARA transcriptional activity. Heterodimerizes with PPARG. Heterodimerizes (via NR LBD) with RARB. Heterodimerizes with NR1H4; the heterodimerization enhances the binding affinity for LXXLL motifs from coactivators. Interacts with coactivator NCO6. Interacts with coactivator NCO3. Interacts with coactivator FAM120B. Interacts with coactivator PELP1, SENP6, SFPQ, DNTTIP2 and RNF8. Interacts with PRMT2. Interacts with ASXL1. Interacts with BHLHE40/DEC1, BHLHE41/DEC2, NCOR1 and NCOR2. Interacts in a ligand-dependent fashion with MED1 and NCOA1. Interacts with VDR. Interacts with EP300; the interaction is decreased by 9-cis retinoic acid. Heterodimer (via C-terminus) with NR4A1 (via DNA-binding domain); the interaction is enhanced by 9-cis retinoic acid. NR4A1 competes with EP300 for interaction with RXRA and thereby attenuates EP300 mediated acetylation of RXRA. In the absence of hormonal ligand, interacts with TACC1. Interacts ith IGFBP3. Acetylated by EP300; acetylation enhances DNA binding and transcriptional activity. Post-translationally, phosphorylated on serine and threonine residues mainly in the N-terminal modulating domain. Constitutively phosphorylated on Ser-22 in the presence or absence of ligand. Under stress conditions, hyperphosphorylated by activated JNK on Ser-61, Ser-75, Thr-87 and Ser-265. Phosphorylated on Ser-28, in vitro, by PKA. This phosphorylation is required for repression of cAMP-mediated transcriptional activity of RARA. In terms of processing, ubiquitinated by UBR5, leading to its degradation: UBR5 specifically recognizes and binds ligand-bound RXRA when it is not associated with coactivators (NCOAs). In presence of NCOAs, the UBR5-degron is not accessible, preventing its ubiquitination and degradation. Sumoylation negatively regulates transcriptional activity. Desumoylated specifically by SENP6. Expressed in macrophages (at protein level).

The protein resides in the nucleus. It localises to the cytoplasm. The protein localises to the mitochondrion. In terms of biological role, receptor for retinoic acid that acts as a transcription factor. Forms homo- or heterodimers with retinoic acid receptors (RARs) and binds to target response elements in response to their ligands, all-trans or 9-cis retinoic acid, to regulate gene expression in various biological processes. The RAR/RXR heterodimers bind to the retinoic acid response elements (RARE) composed of tandem 5'-AGGTCA-3' sites known as DR1-DR5 to regulate transcription. The high affinity ligand for retinoid X receptors (RXRs) is 9-cis retinoic acid. In the absence of ligand, the RXR-RAR heterodimers associate with a multiprotein complex containing transcription corepressors that induce histone deacetylation, chromatin condensation and transcriptional suppression. On ligand binding, the corepressors dissociate from the receptors and coactivators are recruited leading to transcriptional activation. Serves as a common heterodimeric partner for a number of nuclear receptors, such as RARA, RARB and PPARA. The RXRA/RARB heterodimer can act as a transcriptional repressor or transcriptional activator, depending on the RARE DNA element context. The RXRA/PPARA heterodimer is required for PPARA transcriptional activity on fatty acid oxidation genes such as ACOX1 and the P450 system genes. Together with RARA, positively regulates microRNA-10a expression, thereby inhibiting the GATA6/VCAM1 signaling response to pulsatile shear stress in vascular endothelial cells. Acts as an enhancer of RARA binding to RARE DNA element. May facilitate the nuclear import of heterodimerization partners such as VDR and NR4A1. Promotes myelin debris phagocytosis and remyelination by macrophages. Plays a role in the attenuation of the innate immune system in response to viral infections, possibly by negatively regulating the transcription of antiviral genes such as type I IFN genes. Involved in the regulation of calcium signaling by repressing ITPR2 gene expression, thereby controlling cellular senescence. The sequence is that of Retinoic acid receptor RXR-alpha (Rxra) from Mus musculus (Mouse).